Consider the following 162-residue polypeptide: MRVLPLPLLIALGFPAAALAGNQTADCMAQATTPAEQLACVGKSSEACRSHLVDAQPALVAGCITDEVGWWRHRLMDAEAAMQARAEKLDVPYTKQIAEGAPRLTDDFEAMRKAWASWAEKRCTFEAMAHRNSPRRMVYAIDCHLHLTAEQALYLEAAAKGK.

This is an uncharacterized protein from Rhodobacter capsulatus (Rhodopseudomonas capsulata).